The primary structure comprises 66 residues: Large ribosomal subunit protein uL29 (66 aa).

This sequence belongs to the universal ribosomal protein uL29 family.

In Francisella philomiragia subsp. philomiragia (strain ATCC 25017 / CCUG 19701 / FSC 153 / O#319-036), this protein is Large ribosomal subunit protein uL29.